Here is a 405-residue protein sequence, read N- to C-terminus: Cystathionine gamma-lyase (405 aa).

Substrate is bound by residues R62, Y114, and R119. K212 bears the N6-(pyridoxal phosphate)lysine mark. E339 lines the substrate pocket.

This sequence belongs to the trans-sulfuration enzymes family. As to quaternary structure, homotetramer. Interacts with CALM in a calcium-dependent manner. The cofactor is pyridoxal 5'-phosphate.

The protein localises to the cytoplasm. It carries out the reaction L,L-cystathionine + H2O = 2-oxobutanoate + L-cysteine + NH4(+). It functions in the pathway amino-acid biosynthesis; L-cysteine biosynthesis; L-cysteine from L-homocysteine and L-serine: step 2/2. In terms of biological role, catalyzes the last step in the trans-sulfuration pathway from methionine to cysteine. Has broad substrate specificity. Converts cystathionine to cysteine, ammonia and 2-oxobutanoate. Converts two cysteine molecules to lanthionine and hydrogen sulfide. Can also accept homocysteine as substrate. Specificity depends on the levels of the endogenous substrates. Generates the endogenous signaling molecule hydrogen sulfide (H2S), and so contributes to the regulation of blood pressure. Acts as a cysteine-protein sulfhydrase by mediating sulfhydration of target proteins: sulfhydration consists of converting -SH groups into -SSH on specific cysteine residues of target proteins such as GAPDH, PTPN1 and NF-kappa-B subunit RELA, thereby regulating their function. In Bos taurus (Bovine), this protein is Cystathionine gamma-lyase (CTH).